The chain runs to 347 residues: 4-hydroxy-2-oxovalerate aldolase (347 aa).

Residues 2–252 (ILISDATLRD…DTRTTFEHVM (251 aa)) enclose the Pyruvate carboxyltransferase domain. Residue 10-11 (RD) coordinates substrate. A Mn(2+)-binding site is contributed by Asp-11. The Proton acceptor role is filled by His-14. 2 residues coordinate substrate: Ser-164 and His-191. The Mn(2+) site is built by His-191 and His-193.

Belongs to the 4-hydroxy-2-oxovalerate aldolase family.

It catalyses the reaction (S)-4-hydroxy-2-oxopentanoate = acetaldehyde + pyruvate. The chain is 4-hydroxy-2-oxovalerate aldolase (mhpE) from Burkholderia thailandensis (strain ATCC 700388 / DSM 13276 / CCUG 48851 / CIP 106301 / E264).